Consider the following 495-residue polypeptide: Cytochrome P450 monooxygenase cnsC (495 aa).

Cys434 contributes to the heme binding site.

The protein belongs to the cytochrome P450 family. The cofactor is heme.

It functions in the pathway alkaloid biosynthesis. In terms of biological role, cytochrome P450 monooxygenase; part of the gene cluster that mediates the biosynthesis of communesins, a prominent class of indole alkaloids with great potential as pharmaceuticals. Communesins are biosynthesized by the coupling of tryptamine and aurantioclavine, two building blocks derived from L-tryptophan. The L-tryptophan decarboxylase cnsB converts L-tryptophan to tryptamine, whereas the tryptophan dimethylallyltransferase cnsF converts L-tryptophan to 4-dimethylallyl tryptophan which is further transformed to aurantioclavine by the aurantioclavine synthase cnsA, probably aided by the catalase cnsD. The cytochrome P450 monooxygenase cnsC catalyzes the heterodimeric coupling between the two different indole moieties, tryptamine and aurantioclavine, to construct vicinal quaternary stereocenters and yield the heptacyclic communesin scaffold. The O-methyltransferase cnsE then methylates the communesin scaffold to produce communesin K, the simplest characterized communesin that contains the heptacyclic core. The dioxygenase cnsJ converts communesin K into communesin I. Acylation to introduce the hexadienyl group at position N16 of communesin I by the acyltransferase cnsK leads to the production of communesin B. The hexadienyl group is produced by the highly reducing polyketide synthase cnsI, before being hydrolytically removed from cnsI by the serine hydrolase cnsH, converted into hexadienyl-CoA by the CoA ligase cnsG, and then transferred to communesin I by cnsK. Surprisingly, cnsK may also be a promiscuous acyltransferase that can tolerate a range of acyl groups, including acetyl-, propionyl-, and butyryl-CoA, which lead to communesins A, G and H respectively. The roles of the alpha-ketoglutarate-dependent dioxygenases cnsM and cnsP have still to be determined. In Penicillium expansum (Blue mold rot fungus), this protein is Cytochrome P450 monooxygenase cnsC.